A 170-amino-acid chain; its full sequence is CASP-like protein 1F1 (170 aa).

Over 1–16 (MMGDNEGRRTPLLNLG) the chain is Cytoplasmic. A helical membrane pass occupies residues 17–37 (VQVSMRVLTIGAAMASMWVMI). Residues 38–62 (TNREVASVYGIAFEAKYSYSSAFRY) are Extracellular-facing. A helical transmembrane segment spans residues 63–83 (LVYAQIAVCAATLFTLVWACL). Over 84 to 88 (AVRRR) the chain is Cytoplasmic. The chain crosses the membrane as a helical span at residues 89–109 (GLVFALFFFDLLTTLTAISAF). Residues 110-141 (SAAFAEGYVGKYGNKQAGWLPICGYVHGYCSR) lie on the Extracellular side of the membrane. The helical transmembrane segment at 142–162 (VTISLAMSFASFILLFILTVL) threads the bilayer. Residues 163-170 (TASAARHY) are Cytoplasmic-facing.

This sequence belongs to the Casparian strip membrane proteins (CASP) family. In terms of assembly, homodimer and heterodimers. In flowers, expressed in the anther wall.

It localises to the cell membrane. The polypeptide is CASP-like protein 1F1 (Arabidopsis thaliana (Mouse-ear cress)).